We begin with the raw amino-acid sequence, 695 residues long: Elongation factor G (695 aa).

The tr-type G domain maps to Ala10–Ile285. Residues Ala19–Thr26, Asp83–His87, and Asn137–Asp140 each bind GTP.

The protein belongs to the TRAFAC class translation factor GTPase superfamily. Classic translation factor GTPase family. EF-G/EF-2 subfamily.

It is found in the cytoplasm. Functionally, catalyzes the GTP-dependent ribosomal translocation step during translation elongation. During this step, the ribosome changes from the pre-translocational (PRE) to the post-translocational (POST) state as the newly formed A-site-bound peptidyl-tRNA and P-site-bound deacylated tRNA move to the P and E sites, respectively. Catalyzes the coordinated movement of the two tRNA molecules, the mRNA and conformational changes in the ribosome. The polypeptide is Elongation factor G (Limosilactobacillus reuteri (strain DSM 20016) (Lactobacillus reuteri)).